The following is a 295-amino-acid chain: Tyrosine recombinase XerD (295 aa).

The region spanning 1-85 is the Core-binding (CB) domain; the sequence is METIIEEYLR…TIRSFHQFAI (85 aa). The Tyr recombinase domain maps to 106–289; sequence KLPDVLNVDE…SKSQIRKMYN (184 aa). Catalysis depends on residues Arg146, Lys170, His241, Arg244, and His267. Tyr276 serves as the catalytic O-(3'-phospho-DNA)-tyrosine intermediate.

This sequence belongs to the 'phage' integrase family. XerD subfamily. Forms a cyclic heterotetrameric complex composed of two molecules of XerC and two molecules of XerD.

Its subcellular location is the cytoplasm. Functionally, site-specific tyrosine recombinase, which acts by catalyzing the cutting and rejoining of the recombining DNA molecules. The XerC-XerD complex is essential to convert dimers of the bacterial chromosome into monomers to permit their segregation at cell division. It also contributes to the segregational stability of plasmids. The protein is Tyrosine recombinase XerD of Staphylococcus aureus (strain COL).